A 648-amino-acid polypeptide reads, in one-letter code: Biosynthetic arginine decarboxylase (648 aa).

Lysine 109 carries the N6-(pyridoxal phosphate)lysine modification. 291 to 301 (IDVGGGLGIDF) provides a ligand contact to substrate.

The protein belongs to the Orn/Lys/Arg decarboxylase class-II family. SpeA subfamily. Mg(2+) is required as a cofactor. It depends on pyridoxal 5'-phosphate as a cofactor.

It catalyses the reaction L-arginine + H(+) = agmatine + CO2. Catalyzes the biosynthesis of agmatine from arginine. In Prochlorococcus marinus subsp. pastoris (strain CCMP1986 / NIES-2087 / MED4), this protein is Biosynthetic arginine decarboxylase.